The sequence spans 1021 residues: MGKGGGRDKYEPAAISEHGNKKKAKKERDMDELKKEVSMDDHKLSLDELQRKYGTDLSRGLTTARAAEILARDGPNALTPPPTTPEWVKFCRQLFGGFSMLLWIGAILCFLAYGIQAATEEEPQNDNLYLGVVLSAVVIITGCFSYYQEAKSSKIMESFKNMVPQQALVVRNGEKMSINAEEVVVGDLVEVKGGDRIPADLRIISANGCKVDNSSLTGESEPQTRSPDFTNENPLETRNIAFFSTNCVEGTARGIVVYTGDRTVMGRIATLASGLEGGQTPIAAEIEHFIHIITGVAVFLGVTFFILSLILEYTWLEAVIFLIGIIVANVPEGLLATVTVCLTLTAKRMARKNCLVKNLEAVETLGSTSTICSDKTGTLTQNRMTVAHMWFDNQIHEADTTENQSGVSFDKTSATWLSLSRIAGLCNRAVFQANQENIPILKRAVAGDASESALLKCIELCCGSVKEMRDRYPKIVEIPFNSTNKYQLSIHKNPNTSEPQHLLVMKGAPERILDRCSSILLNGKEQPLDEELKDAFQNAYLELGGLGERVLGFCHLFLPDEQFPEGFQFDTDDVNFPLENLCFVGLISMIDPPRAAVPDAVGKCRSAGIKVIMVTGDHPITAKAIAKGVGIISEGNETVEDIAARLNIPVSQVNPRDAKACVVHGSDLKDMTPEQLDDILRHHTEIVFARTSPQQKLIIVEGCQRQGAIVAVTGDGVNDSPALKKADIGVAMGIAGSDVSKQAADMILLDDNFASIVTGVEEGRLIFDNLKKSIAYTLTSNIPEITPFLIFIIANIPLPLGTVTILCIDLGTDMVPAISLAYEQAESDIMKRQPRNPQTDKLVNERLISMAYGQIGMIQALGGFFTYFVILAENGFLPIHLLGLRVDWDDRWVNDVEDSYGQQWTYEQRKIVEFTCHTAFFVSIVVVQWADLVICKTRRNSVFQQGMKNKILIFGLFEETALAAFLSYCPGMGVALRMYPLKPTWWFCAFPYSLLIFVYDEVRKLIIRRRPGGWVEKETYY.

Residues 1 to 5 constitute a propeptide that is removed on maturation; that stretch reads MGKGG. The span at 1–11 shows a compositional bias: basic and acidic residues; the sequence is MGKGGGRDKYE. The tract at residues 1–37 is disordered; sequence MGKGGGRDKYEPAAISEHGNKKKAKKERDMDELKKEV. Topologically, residues 6–85 are cytoplasmic; that stretch reads GRDKYEPAAI…NALTPPPTTP (80 aa). Position 9 is an N6-acetyllysine (K9). Position 10 is a phosphotyrosine (Y10). S16 is modified (phosphoserine; by PKC). Position 21 is an N6-acetyllysine (K21). Basic and acidic residues predominate over residues 26–37; that stretch reads KERDMDELKKEV. Phosphoserine is present on residues S38 and S45. The phosphoinositide-3 kinase binding stretch occupies residues 80 to 82; sequence PPP. A helical membrane pass occupies residues 86–106; sequence EWVKFCRQLFGGFSMLLWIGA. At 107-129 the chain is on the extracellular side; it reads ILCFLAYGIQAATEEEPQNDNLY. Residues 130–150 traverse the membrane as a helical segment; sequence LGVVLSAVVIITGCFSYYQEA. At 151-286 the chain is on the cytoplasmic side; it reads KSSKIMESFK…GGQTPIAAEI (136 aa). A disordered region spans residues 214–233; it reads SSLTGESEPQTRSPDFTNEN. Residue S226 is modified to Phosphoserine. At Y258 the chain carries Phosphotyrosine. A helical membrane pass occupies residues 287 to 306; it reads EHFIHIITGVAVFLGVTFFI. The Extracellular portion of the chain corresponds to 307–318; the sequence is LSLILEYTWLEA. The helical transmembrane segment at 319–336 threads the bilayer; sequence VIFLIGIIVANVPEGLLA. Topologically, residues 337 to 770 are cytoplasmic; the sequence is TVTVCLTLTA…EEGRLIFDNL (434 aa). D374 serves as the catalytic 4-aspartylphosphate intermediate. Residues S450 and S482 each carry the phosphoserine modification. K485 provides a ligand contact to ATP. A Phosphotyrosine modification is found at Y540. A mediates interaction with SCN7A region spans residues 594-715; the sequence is RAAVPDAVGK…QGAIVAVTGD (122 aa). An N6-succinyllysine modification is found at K659. S666 is modified (phosphoserine). Positions 715 and 719 each coordinate Mg(2+). The helical transmembrane segment at 771–790 threads the bilayer; that stretch reads KKSIAYTLTSNIPEITPFLI. The Extracellular segment spans residues 791 to 800; sequence FIIANIPLPL. The helical transmembrane segment at 801–821 threads the bilayer; that stretch reads GTVTILCIDLGTDMVPAISLA. The Cytoplasmic segment spans residues 822 to 841; sequence YEQAESDIMKRQPRNPQTDK. The chain crosses the membrane as a helical span at residues 842 to 864; the sequence is LVNERLISMAYGQIGMIQALGGF. Over 865-916 the chain is Extracellular; it reads FTYFVILAENGFLPIHLLGLRVDWDDRWVNDVEDSYGQQWTYEQRKIVEFTC. Residues 917-936 traverse the membrane as a helical segment; the sequence is HTAFFVSIVVVQWADLVICK. The Cytoplasmic portion of the chain corresponds to 937 to 949; sequence TRRNSVFQQGMKN. S941 carries the phosphoserine; by PKA modification. Residues 950–968 traverse the membrane as a helical segment; the sequence is KILIFGLFEETALAAFLSY. Residues 969 to 983 are Extracellular-facing; the sequence is CPGMGVALRMYPLKP. A helical transmembrane segment spans residues 984–1004; it reads TWWFCAFPYSLLIFVYDEVRK. The Cytoplasmic segment spans residues 1005–1021; sequence LIIRRRPGGWVEKETYY.

It belongs to the cation transport ATPase (P-type) (TC 3.A.3) family. Type IIC subfamily. In terms of assembly, the sodium/potassium-transporting ATPase is composed of a catalytic alpha subunit, an auxiliary non-catalytic beta subunit and an additional regulatory subunit. Interacts with regulatory subunit FXYD1. Interacts with regulatory subunit FXYD3. Interacts with SIK1. Interacts with SLC35G1 and STIM1. Interacts with CLN3; this interaction regulates the sodium/potassium-transporting ATPase complex localization at the plasma membrane. Interacts with SCN7A; activates ATP1A1 P-type sodium:potassium-exchanging transporter activity which indirectly signals to nearby neurons to regulate sodium homeostasis. Phosphorylation on Tyr-10 modulates pumping activity. Phosphorylation of Ser-941 by PKA modulates the response of ATP1A1 to PKC. Dephosphorylation by protein phosphatase 2A (PP2A) following increases in intracellular sodium, leading to increase catalytic activity.

The protein resides in the cell membrane. Its subcellular location is the basolateral cell membrane. It localises to the sarcolemma. It is found in the cell projection. The protein localises to the axon. The protein resides in the melanosome. The enzyme catalyses K(+)(out) + Na(+)(in) + ATP + H2O = K(+)(in) + Na(+)(out) + ADP + phosphate + H(+). Functionally, this is the catalytic component of the active enzyme, which catalyzes the hydrolysis of ATP coupled with the exchange of sodium and potassium ions across the plasma membrane. This action creates the electrochemical gradient of sodium and potassium ions, providing the energy for active transport of various nutrients. Could also be part of an osmosensory signaling pathway that senses body-fluid sodium levels and controls salt intake behavior as well as voluntary water intake to regulate sodium homeostasis. The chain is Sodium/potassium-transporting ATPase subunit alpha-1 (ATP1A1) from Equus caballus (Horse).